A 420-amino-acid chain; its full sequence is Acetyl-CoA acetyltransferase, mitochondrial (420 aa).

The N-terminal 33 residues, 1–33, are a transit peptide targeting the mitochondrion; that stretch reads MAFCGPRTAARLSHSTRALHYTHRGHVSQRTLN. The active-site Acyl-thioester intermediate is the C119. CoA contacts are provided by residues Y212, 251-253, and K256; that span reads RVD. Y212 is a K(+) binding site. A273, A274, and A276 together coordinate K(+). Position 277 (S277) interacts with CoA. V374 is a binding site for K(+). C406 functions as the Proton donor/acceptor in the catalytic mechanism.

Belongs to the thiolase-like superfamily. Thiolase family. In terms of assembly, homotetramer.

It localises to the mitochondrion. It catalyses the reaction 2 acetyl-CoA = acetoacetyl-CoA + CoA. It carries out the reaction propanoyl-CoA + acetyl-CoA = 2-methyl-3-oxobutanoyl-CoA + CoA. It participates in lipid metabolism; fatty acid beta-oxidation. In terms of biological role, this is one of the enzymes that catalyzes the last step of the mitochondrial beta-oxidation pathway, an aerobic process breaking down fatty acids into acetyl-CoA. Using free coenzyme A/CoA, catalyzes the thiolytic cleavage of medium- to long-chain 3-oxoacyl-CoAs into acetyl-CoA and a fatty acyl-CoA shortened by two carbon atoms. The activity of the enzyme is reversible and it can also catalyze the condensation of two acetyl-CoA molecules into acetoacetyl-CoA. Thereby, it plays a major role in ketone body metabolism. The chain is Acetyl-CoA acetyltransferase, mitochondrial (acat1) from Xenopus tropicalis (Western clawed frog).